Consider the following 59-residue polypeptide: Large ribosomal subunit protein uL30 (59 aa).

It belongs to the universal ribosomal protein uL30 family. As to quaternary structure, part of the 50S ribosomal subunit.

The protein is Large ribosomal subunit protein uL30 of Psychrobacter sp. (strain PRwf-1).